Consider the following 530-residue polypeptide: Ubiquitin carboxyl-terminal hydrolase 17-like protein 21 (530 aa).

The region spanning 80–375 is the USP domain; sequence AGLQNMGNTC…QAYVLFYIQK (296 aa). Cys89 serves as the catalytic Nucleophile. The active-site Proton acceptor is His334. 2 stretches are compositionally biased toward basic and acidic residues: residues 382 to 392 and 398 to 412; these read SESVSRGREPR and DTDR…KRDH. Disordered regions lie at residues 382–412 and 477–530; these read SESV…KRDH and NHHP…LVCQ. A compositionally biased stretch (polar residues) spans 493 to 505; sequence TPTHQESMNTGTL. Basic residues predominate over residues 510 to 524; sequence GRARRSKGKNKHSKR.

Belongs to the peptidase C19 family. USP17 subfamily.

The protein localises to the nucleus. It localises to the endoplasmic reticulum. The enzyme catalyses Thiol-dependent hydrolysis of ester, thioester, amide, peptide and isopeptide bonds formed by the C-terminal Gly of ubiquitin (a 76-residue protein attached to proteins as an intracellular targeting signal).. In terms of biological role, deubiquitinating enzyme that removes conjugated ubiquitin from specific proteins to regulate different cellular processes that may include cell proliferation, progression through the cell cycle, apoptosis, cell migration, and the cellular response to viral infection. The sequence is that of Ubiquitin carboxyl-terminal hydrolase 17-like protein 21 (USP17L21) from Homo sapiens (Human).